We begin with the raw amino-acid sequence, 24 residues long: Aldehyde dehydrogenase gamma chain (24 aa).

As to quaternary structure, heterotrimer composed of an alpha, a beta and a gamma chain. Requires [2Fe-2S] cluster as cofactor.

It catalyses the reaction an aldehyde + a quinone + H2O = a quinol + a carboxylate + H(+). This Comamonas testosteroni (Pseudomonas testosteroni) protein is Aldehyde dehydrogenase gamma chain.